The following is a 131-amino-acid chain: Large ribosomal subunit protein bL17 (131 aa).

Belongs to the bacterial ribosomal protein bL17 family. Part of the 50S ribosomal subunit. Contacts protein L32.

This chain is Large ribosomal subunit protein bL17, found in Cupriavidus necator (strain ATCC 17699 / DSM 428 / KCTC 22496 / NCIMB 10442 / H16 / Stanier 337) (Ralstonia eutropha).